Consider the following 654-residue polypeptide: Chaperone protein DnaK (654 aa).

T205 carries the phosphothreonine; by autocatalysis modification. Residues 592-654 form a disordered region; that stretch reads ELERQMQQIG…EVEILDDKKP (63 aa). Over residues 608–621 the composition is skewed to polar residues; sequence AGQSETQSTGPGSY. Positions 622 to 636 are enriched in low complexity; that stretch reads QESSNQSSQHQTNNN.

This sequence belongs to the heat shock protein 70 family.

Its function is as follows. Acts as a chaperone. In Protochlamydia amoebophila (strain UWE25), this protein is Chaperone protein DnaK.